Here is a 490-residue protein sequence, read N- to C-terminus: Betaine aldehyde dehydrogenase (490 aa).

NAD(+) is bound by residues K174, E177, and 227–232 (GGIETG). Catalysis depends on residues E249 and C283. Position 384 (E384) interacts with NAD(+).

This sequence belongs to the aldehyde dehydrogenase family. In terms of assembly, homodimer.

It carries out the reaction betaine aldehyde + NAD(+) + H2O = glycine betaine + NADH + 2 H(+). Its pathway is amine and polyamine biosynthesis; betaine biosynthesis via choline pathway; betaine from betaine aldehyde: step 1/1. Its activity is regulated as follows. Activity is stimulated by low concentrations of salts and by moderate concentrations of glycine betaine. Highly tolerant to high ionic conditions. In vitro, activity is highly stimulated in the presence of proline. Functionally, involved in the biosynthesis of the osmoprotectant glycine betaine from choline. Catalyzes the oxidation of betaine aldehyde to betaine. Shows specificity for betaine aldehyde as substrate. Can use both NAD(+) and NADP(+), but NAD(+) is strongly preferred. This is Betaine aldehyde dehydrogenase from Bacillus subtilis (strain 168).